A 311-amino-acid polypeptide reads, in one-letter code: Acetyl-coenzyme A carboxylase carboxyl transferase subunit alpha (311 aa).

The CoA carboxyltransferase C-terminal domain maps to 36–286; the sequence is KLEKEVEKTF…KEYFIKSLAE (251 aa).

It belongs to the AccA family. Acetyl-CoA carboxylase is a heterohexamer composed of biotin carboxyl carrier protein (AccB), biotin carboxylase (AccC) and two subunits each of ACCase subunit alpha (AccA) and ACCase subunit beta (AccD).

The protein localises to the cytoplasm. It catalyses the reaction N(6)-carboxybiotinyl-L-lysyl-[protein] + acetyl-CoA = N(6)-biotinyl-L-lysyl-[protein] + malonyl-CoA. It participates in lipid metabolism; malonyl-CoA biosynthesis; malonyl-CoA from acetyl-CoA: step 1/1. In terms of biological role, component of the acetyl coenzyme A carboxylase (ACC) complex. First, biotin carboxylase catalyzes the carboxylation of biotin on its carrier protein (BCCP) and then the CO(2) group is transferred by the carboxyltransferase to acetyl-CoA to form malonyl-CoA. This is Acetyl-coenzyme A carboxylase carboxyl transferase subunit alpha from Aliarcobacter butzleri (strain RM4018) (Arcobacter butzleri).